The chain runs to 118 residues: Protein TusC (118 aa).

Belongs to the DsrF/TusC family. Heterohexamer, formed by a dimer of trimers. The hexameric TusBCD complex contains 2 copies each of TusB, TusC and TusD. The TusBCD complex interacts with TusE.

The protein resides in the cytoplasm. In terms of biological role, part of a sulfur-relay system required for 2-thiolation of 5-methylaminomethyl-2-thiouridine (mnm(5)s(2)U) at tRNA wobble positions. This is Protein TusC from Salmonella agona (strain SL483).